The primary structure comprises 251 residues: Probable transcriptional regulatory protein DehaBAV1_0421 (251 aa).

It belongs to the TACO1 family.

It localises to the cytoplasm. The protein is Probable transcriptional regulatory protein DehaBAV1_0421 of Dehalococcoides mccartyi (strain ATCC BAA-2100 / JCM 16839 / KCTC 5957 / BAV1).